A 197-amino-acid chain; its full sequence is Protein GrpE (197 aa).

The interval 1 to 43 is disordered; the sequence is MSSKEQKTPDGQAPEEIVTEQHEEVESVESAESAEQVDPRDEE.

Belongs to the GrpE family. As to quaternary structure, homodimer.

The protein localises to the cytoplasm. Its function is as follows. Participates actively in the response to hyperosmotic and heat shock by preventing the aggregation of stress-denatured proteins, in association with DnaK and GrpE. It is the nucleotide exchange factor for DnaK and may function as a thermosensor. Unfolded proteins bind initially to DnaJ; upon interaction with the DnaJ-bound protein, DnaK hydrolyzes its bound ATP, resulting in the formation of a stable complex. GrpE releases ADP from DnaK; ATP binding to DnaK triggers the release of the substrate protein, thus completing the reaction cycle. Several rounds of ATP-dependent interactions between DnaJ, DnaK and GrpE are required for fully efficient folding. This Cronobacter sakazakii (strain ATCC BAA-894) (Enterobacter sakazakii) protein is Protein GrpE.